Reading from the N-terminus, the 1089-residue chain is GPI ethanolamine phosphate transferase 3, catalytic subunit (1089 aa).

Residues Ala4 to Phe24 form a helical membrane-spanning segment. Asn268 carries N-linked (GlcNAc...) asparagine glycosylation. Helical transmembrane passes span Leu457–Phe477, Leu482–Gly502, Leu510–Trp530, Thr541–Phe561, Phe575–Leu595, Leu668–Leu688, Met701–Leu721, Val747–Val767, Ser830–Leu850, Leu857–Ile877, Phe944–Cys964, Leu1014–Leu1034, and Phe1048–Leu1068.

The protein belongs to the PIGG/PIGN/PIGO family. PIGO subfamily. As to quaternary structure, part of the ethanolamine phosphate transferase 3 complex composed by PIGO and PIGF. PIGF is required to stabilize PIGO.

It is found in the endoplasmic reticulum membrane. It participates in glycolipid biosynthesis; glycosylphosphatidylinositol-anchor biosynthesis. In terms of biological role, catalytic subunit of the ethanolamine phosphate transferase 3 complex that transfers an ethanolamine phosphate (EtNP) from a phosphatidylethanolamine (PE) to the 6-OH position of the third alpha-1,2-linked mannose of an alpha-D-Man-(1-&gt;2)-alpha-D-Man-(1-&gt;6)-2-PEtn-alpha-D-Man-(1-&gt;4)-alpha-D-GlcN-(1-&gt;6)-(1-radyl,2-acyl-sn-glycero-3-phospho)-2-acyl-inositol (also termed H6) intermediate to generate a 6-PEtn-alpha-D-Man-(1-&gt;2)-alpha-D-Man-(1-&gt;6)-2-PEtn-alpha-D-Man-(1-&gt;4)-alpha-D-GlcN-(1-&gt;6)-(1-radyl,2-acyl-sn-glycero-3-phospho)-2-acyl-inositol (also termed H7) and participates in the tenth step of the glycosylphosphatidylinositol-anchor biosynthesis. This chain is GPI ethanolamine phosphate transferase 3, catalytic subunit, found in Homo sapiens (Human).